Reading from the N-terminus, the 373-residue chain is Transaldolase (373 aa).

Lys-143 acts as the Schiff-base intermediate with substrate in catalysis.

Belongs to the transaldolase family. Type 2 subfamily.

Its subcellular location is the cytoplasm. It carries out the reaction D-sedoheptulose 7-phosphate + D-glyceraldehyde 3-phosphate = D-erythrose 4-phosphate + beta-D-fructose 6-phosphate. It functions in the pathway carbohydrate degradation; pentose phosphate pathway; D-glyceraldehyde 3-phosphate and beta-D-fructose 6-phosphate from D-ribose 5-phosphate and D-xylulose 5-phosphate (non-oxidative stage): step 2/3. Transaldolase is important for the balance of metabolites in the pentose-phosphate pathway. This chain is Transaldolase, found in Mycobacterium ulcerans (strain Agy99).